Reading from the N-terminus, the 414-residue chain is Protein HIM1 (414 aa).

May participate in the control of processing of mutational intermediates appearing during error-prone bypass of DNA damage. The sequence is that of Protein HIM1 (HIM1) from Saccharomyces cerevisiae (strain ATCC 204508 / S288c) (Baker's yeast).